The primary structure comprises 277 residues: NADPH-dependent 7-cyano-7-deazaguanine reductase (277 aa).

Substrate is bound at residue 83–85 (VES). 85–86 (SK) provides a ligand contact to NADPH. Residue Cys-184 is the Thioimide intermediate of the active site. The active-site Proton donor is Asp-191. 223–224 (HE) is a substrate binding site. Residue 252-253 (RG) participates in NADPH binding.

Belongs to the GTP cyclohydrolase I family. QueF type 2 subfamily. Homodimer.

The protein localises to the cytoplasm. It catalyses the reaction 7-aminomethyl-7-carbaguanine + 2 NADP(+) = 7-cyano-7-deazaguanine + 2 NADPH + 3 H(+). It participates in tRNA modification; tRNA-queuosine biosynthesis. In terms of biological role, catalyzes the NADPH-dependent reduction of 7-cyano-7-deazaguanine (preQ0) to 7-aminomethyl-7-deazaguanine (preQ1). This chain is NADPH-dependent 7-cyano-7-deazaguanine reductase, found in Cupriavidus metallidurans (strain ATCC 43123 / DSM 2839 / NBRC 102507 / CH34) (Ralstonia metallidurans).